The sequence spans 890 residues: Alanine--tRNA ligase (890 aa).

Residues His564, His568, Cys677, and His681 each coordinate Zn(2+).

The protein belongs to the class-II aminoacyl-tRNA synthetase family. The cofactor is Zn(2+).

It localises to the cytoplasm. It catalyses the reaction tRNA(Ala) + L-alanine + ATP = L-alanyl-tRNA(Ala) + AMP + diphosphate. Catalyzes the attachment of alanine to tRNA(Ala) in a two-step reaction: alanine is first activated by ATP to form Ala-AMP and then transferred to the acceptor end of tRNA(Ala). Also edits incorrectly charged Ser-tRNA(Ala) and Gly-tRNA(Ala) via its editing domain. This chain is Alanine--tRNA ligase, found in Rhodopseudomonas palustris (strain BisB18).